The chain runs to 49 residues: Large ribosomal subunit protein bL33B (49 aa).

The protein belongs to the bacterial ribosomal protein bL33 family.

This is Large ribosomal subunit protein bL33B from Lacticaseibacillus paracasei (strain ATCC 334 / BCRC 17002 / CCUG 31169 / CIP 107868 / KCTC 3260 / NRRL B-441) (Lactobacillus paracasei).